Here is a 1397-residue protein sequence, read N- to C-terminus: DNA-directed RNA polymerase subunit beta (1397 aa).

It belongs to the RNA polymerase beta chain family. In terms of assembly, the RNAP catalytic core consists of 2 alpha, 1 beta, 1 beta' and 1 omega subunit. When a sigma factor is associated with the core the holoenzyme is formed, which can initiate transcription.

It carries out the reaction RNA(n) + a ribonucleoside 5'-triphosphate = RNA(n+1) + diphosphate. Functionally, DNA-dependent RNA polymerase catalyzes the transcription of DNA into RNA using the four ribonucleoside triphosphates as substrates. The protein is DNA-directed RNA polymerase subunit beta of Rhodospirillum centenum (strain ATCC 51521 / SW).